The chain runs to 231 residues: UPF0749 protein YlxW (231 aa).

The N-terminal stretch at 1–34 (MRGKSAVLLSLIMLIAGFLISFSFQMTKENNKSA) is a signal peptide. Residues 44-94 (YALRDELLKQEKENKKFEKELYQKQNKVRQAENKLKKEKSEYYNVLEDTEK) adopt a coiled-coil conformation.

It belongs to the UPF0749 family.

May be involved in cell division and sporulation. This Bacillus subtilis (strain 168) protein is UPF0749 protein YlxW (ylxW).